We begin with the raw amino-acid sequence, 347 residues long: Isocitrate dehydrogenase [NAD] subunit alpha, mitochondrial (347 aa).

The N-terminal 8 residues, Gln1–Phe8, are a transit peptide targeting the mitochondrion. Residue Thr14–Ile42 coordinates NAD(+). Residue Lys58 is modified to N6-succinyllysine. A Phosphothreonine modification is found at Thr82. Arg96, Arg106, and Arg127 together coordinate substrate. An N6-acetyllysine modification is found at Lys204. Residues Asp214, Asp238, and Asp242 each coordinate Mg(2+). Lys324 is subject to N6-acetyllysine; alternate. Lys324 bears the N6-succinyllysine; alternate mark. Lys331 is modified (N6-succinyllysine).

This sequence belongs to the isocitrate and isopropylmalate dehydrogenases family. As to quaternary structure, heterooligomer of subunits alpha (IDH3A), beta (IDH3B), and gamma (IDH3G) in the apparent ratio of 2:1:1. The heterodimer containing one IDH3A and one IDH3B subunit and the heterodimer containing one IDH3A and one IDH3G subunit assemble into a heterotetramer (which contains two subunits of IDH3A, one of IDH3B and one of IDH3G) and further into the heterooctamer. It depends on Mg(2+) as a cofactor. The cofactor is Mn(2+).

The protein resides in the mitochondrion. It catalyses the reaction D-threo-isocitrate + NAD(+) = 2-oxoglutarate + CO2 + NADH. With respect to regulation, the heterotetramer and the heterodimer composed of IDH3A and IDH3G subunits can be allosterically activated by citrate (CIT) or/and ADP, and the two activators can act independently or synergistically. The heterodimer composed of IDH3A and IDH3B subunits cannot be allosterically regulated and the allosteric regulation of the heterotetramer is through the IDH3G subunit and not the IDH3B subunit. The IDH3G subunit contains the allosteric site which consists of a CIT-binding site and an ADP-binding site, and the binding of CIT and ADP causes conformational changes at the allosteric site which are transmitted to the active site in the catalytic subunit (IDH3A) through a cascade of conformational changes at the heterodimer interface, leading to stabilization of the isocitrate-binding at the active site and thus activation of the enzyme. ATP can activate the heterotetramer and the heterodimer composed of IDH3A and IDH3G subunits at low concentrations but inhibits their activities at high concentrations, whereas ATP exhibits only inhibitory effect on the heterodimer composed of IDH3A and IDH3B subunits. Functionally, catalytic subunit of the enzyme which catalyzes the decarboxylation of isocitrate (ICT) into alpha-ketoglutarate. The heterodimer composed of the alpha (IDH3A) and beta (IDH3B) subunits and the heterodimer composed of the alpha (IDH3A) and gamma (IDH3G) subunits, have considerable basal activity but the full activity of the heterotetramer (containing two subunits of IDH3A, one of IDH3B and one of IDH3G) requires the assembly and cooperative function of both heterodimers. The protein is Isocitrate dehydrogenase [NAD] subunit alpha, mitochondrial (IDH3A) of Macaca fascicularis (Crab-eating macaque).